A 591-amino-acid polypeptide reads, in one-letter code: Aspartate--tRNA(Asp/Asn) ligase (591 aa).

Glutamate 175 is a binding site for L-aspartate. The aspartate stretch occupies residues 199–202 (QQFK). L-aspartate is bound by residues arginine 221 and histidine 453. 221-223 (RDE) contributes to the ATP binding site. Glutamate 486 is a binding site for ATP. Position 493 (arginine 493) interacts with L-aspartate. An ATP-binding site is contributed by 538 to 541 (GIDR).

The protein belongs to the class-II aminoacyl-tRNA synthetase family. Type 1 subfamily. As to quaternary structure, homodimer.

The protein localises to the cytoplasm. It carries out the reaction tRNA(Asx) + L-aspartate + ATP = L-aspartyl-tRNA(Asx) + AMP + diphosphate. Aspartyl-tRNA synthetase with relaxed tRNA specificity since it is able to aspartylate not only its cognate tRNA(Asp) but also tRNA(Asn). Reaction proceeds in two steps: L-aspartate is first activated by ATP to form Asp-AMP and then transferred to the acceptor end of tRNA(Asp/Asn). The chain is Aspartate--tRNA(Asp/Asn) ligase from Cereibacter sphaeroides (strain KD131 / KCTC 12085) (Rhodobacter sphaeroides).